The following is a 271-amino-acid chain: Cobalt import ATP-binding protein CbiO (271 aa).

The 235-residue stretch at 2–236 (LATSDLWFRY…TEAMEHAGLT (235 aa)) folds into the ABC transporter domain. 34-41 (GANGCGKS) is an ATP binding site.

The protein belongs to the ABC transporter superfamily. Cobalt importer (TC 3.A.1.18.1) family. Forms an energy-coupling factor (ECF) transporter complex composed of an ATP-binding protein (A component, CbiO), a transmembrane protein (T component, CbiQ) and 2 possible substrate-capture proteins (S components, CbiM and CbiN) of unknown stoichimetry. Expression of just CbiMN in E.coli confers some cobalt uptake.

Its subcellular location is the cell inner membrane. The protein operates within cofactor biosynthesis; adenosylcobalamin biosynthesis. Part of the energy-coupling factor (ECF) transporter complex CbiMNOQ involved in cobalt import. The complex confers cobalt uptake upon expression in E.coli; can also transport nickel with a very low affinity. Presumably responsible for energy coupling to the transport system. The chain is Cobalt import ATP-binding protein CbiO from Salmonella typhimurium (strain LT2 / SGSC1412 / ATCC 700720).